Here is a 234-residue protein sequence, read N- to C-terminus: MLTYETWEENVVSFSEEDETKGALSVLNWAYKEYKDEVVYACSFGVEGMVLLHIINQVNPSAKVVFLDTNVHFQETYELIRKVRERFPSLNIIEKQPELTLDEQAKLHGEKLWESNPNLCCKIRKILPLEKSLVVEKAWISGLRREQSETRKHTKFINQDHRFQSIKVCPLIHWTWKEVWRYVYKHSLPYNPLHDVGYPSIGCEKCTLPVGDGGDSRDGRWAGKVKTECGLHYQ.

[4Fe-4S] cluster is bound by residues C120, C121, C203, and C206. C229 serves as the catalytic Nucleophile; cysteine thiosulfonate intermediate.

It belongs to the PAPS reductase family. CysH subfamily. The cofactor is [4Fe-4S] cluster.

The protein resides in the cytoplasm. The catalysed reaction is [thioredoxin]-disulfide + sulfite + AMP + 2 H(+) = adenosine 5'-phosphosulfate + [thioredoxin]-dithiol. It participates in sulfur metabolism; hydrogen sulfide biosynthesis; sulfite from sulfate. In terms of biological role, catalyzes the formation of sulfite from adenosine 5'-phosphosulfate (APS) using thioredoxin as an electron donor. This Bacillus cereus (strain ATCC 14579 / DSM 31 / CCUG 7414 / JCM 2152 / NBRC 15305 / NCIMB 9373 / NCTC 2599 / NRRL B-3711) protein is Adenosine 5'-phosphosulfate reductase.